Reading from the N-terminus, the 340-residue chain is Phenylalanine--tRNA ligase alpha subunit (340 aa).

Position 254 (Glu254) interacts with Mg(2+).

Belongs to the class-II aminoacyl-tRNA synthetase family. Phe-tRNA synthetase alpha subunit type 1 subfamily. Tetramer of two alpha and two beta subunits. Mg(2+) is required as a cofactor.

The protein localises to the cytoplasm. The catalysed reaction is tRNA(Phe) + L-phenylalanine + ATP = L-phenylalanyl-tRNA(Phe) + AMP + diphosphate + H(+). The chain is Phenylalanine--tRNA ligase alpha subunit from Chloroherpeton thalassium (strain ATCC 35110 / GB-78).